The chain runs to 1147 residues: uncharacterized protein (1147 aa).

7 disordered regions span residues 226 to 245 (FGQG…GQVD), 255 to 297 (IQGT…QEKA), 431 to 617 (SQHP…QSCI), 647 to 670 (EEMD…DPVR), 705 to 945 (HRHR…RRLQ), 1003 to 1032 (RQQQ…EAEK), and 1060 to 1090 (YQRR…RLAQ). Positions 268-296 (WQKDETQTEDTSKDNHHCIHTSKENHQEK) are enriched in basic and acidic residues. Residues 431 to 441 (SQHPPKGKAQR) show a composition bias toward basic residues. Residues 538–549 (PAGGALPAAGQA) are compositionally biased toward low complexity. Residues 584–603 (LNETSPLTQKPENQGAQQSL) are compositionally biased toward polar residues. The segment covering 743-752 (NQKTSNNISN) has biased composition (polar residues). Positions 743–804 (NQKTSNNISN…ESKAEKKSQL (62 aa)) form a coiled coil. The segment covering 768–802 (TDKSKAPKREKEGKLHEEAEAAVGKSKESKAEKKS) has biased composition (basic and acidic residues). Over residues 807-819 (KGKKTGAKGKRTR) the composition is skewed to basic residues. A compositionally biased stretch (polar residues) spans 870–884 (SQVSIDGRSSPTQTA). The segment covering 895–945 (DRSHEDPSKAFLVKREQEKASRDRLRAERAEMRRLEVERKRREQEEQRRLQ) has biased composition (basic and acidic residues). Positions 907-1112 (VKREQEKASR…QKDALKKHLH (206 aa)) form a coiled coil.

This is an uncharacterized protein from Bos taurus (Bovine).